A 1250-amino-acid chain; its full sequence is DNA-directed RNA polymerase subunit beta (1250 aa).

Residues 1139–1226 are disordered; sequence GGAELAKPAP…DLFDEGDEDL (88 aa). 2 stretches are compositionally biased toward acidic residues: residues 1155-1183 and 1207-1226; these read ESGEAGEESEGEPEEEDVEEIDVPLDPEE and ADDDQEMDEEDLFDEGDEDL.

This sequence belongs to the RNA polymerase beta chain family. The RNAP catalytic core consists of 2 alpha, 1 beta, 1 beta' and 1 omega subunit. When a sigma factor is associated with the core the holoenzyme is formed, which can initiate transcription.

The catalysed reaction is RNA(n) + a ribonucleoside 5'-triphosphate = RNA(n+1) + diphosphate. Functionally, DNA-dependent RNA polymerase catalyzes the transcription of DNA into RNA using the four ribonucleoside triphosphates as substrates. This is DNA-directed RNA polymerase subunit beta from Symbiobacterium thermophilum (strain DSM 24528 / JCM 14929 / IAM 14863 / T).